The primary structure comprises 383 residues: Embryonic pepsinogen (383 aa).

Residues 1-16 form the signal peptide; that stretch reads MRSLALLCAVLALSDG. Residues 76-380 enclose the Peptidase A1 domain; it reads YYGTISIGTP…DRANNRVGLA (305 aa). Asp-94 is a catalytic residue. The cysteines at positions 107 and 112 are disulfide-linked. N-linked (GlcNAc...) asparagine glycans are attached at residues Asn-132 and Asn-204. A disulfide bridge links Cys-267 with Cys-271. The active site involves Asp-276. Asn-309 carries an N-linked (GlcNAc...) asparagine glycan. Residues Cys-310 and Cys-344 are joined by a disulfide bond. N-linked (GlcNAc...) asparagine glycosylation occurs at Asn-350.

The protein belongs to the peptidase A1 family.

In Gallus gallus (Chicken), this protein is Embryonic pepsinogen.